The following is a 98-amino-acid chain: uncharacterized protein (98 aa).

The signal sequence occupies residues 1–19 (MTERRRALSLAAVVDSINL). A disordered region spans residues 40–98 (PPGGSFSGIKRESRRKRPSRNEIYGGGVLEQEVRMRRWSKTASPPVSLHHRPLGPARKP). A compositionally biased stretch (basic residues) spans 87–98 (LHHRPLGPARKP).

This is an uncharacterized protein from Homo sapiens (Human).